Here is a 126-residue protein sequence, read N- to C-terminus: Protein Wnt-7(II) (126 aa).

Ser-1 is lipidated: O-palmitoleoyl serine; by PORCN. Cys-92 and Cys-107 are disulfide-bonded. N-linked (GlcNAc...) asparagine glycosylation occurs at Asn-93.

It belongs to the Wnt family. In terms of processing, palmitoleoylation is required for efficient binding to frizzled receptors. Depalmitoleoylation leads to Wnt signaling pathway inhibition.

It localises to the secreted. Its subcellular location is the extracellular space. The protein localises to the extracellular matrix. Functionally, ligand for members of the frizzled family of seven transmembrane receptors. Probable developmental protein. May be a signaling molecule which affects the development of discrete regions of tissues. Is likely to signal over only few cell diameters. This Eptatretus stoutii (Pacific hagfish) protein is Protein Wnt-7(II) (WNT-7(II)).